The sequence spans 287 residues: Diaminopimelate epimerase (287 aa).

The substrate site is built by Asn-11, Gln-44, and Asn-64. The active-site Proton donor is the Cys-73. Residues 74-75, Asn-157, Asn-190, and 208-209 contribute to the substrate site; these read GN and ER. Cys-217 functions as the Proton acceptor in the catalytic mechanism. 218–219 is a substrate binding site; sequence GT.

The protein belongs to the diaminopimelate epimerase family. In terms of assembly, homodimer.

It localises to the cytoplasm. The enzyme catalyses (2S,6S)-2,6-diaminopimelate = meso-2,6-diaminopimelate. It functions in the pathway amino-acid biosynthesis; L-lysine biosynthesis via DAP pathway; DL-2,6-diaminopimelate from LL-2,6-diaminopimelate: step 1/1. Its function is as follows. Catalyzes the stereoinversion of LL-2,6-diaminopimelate (L,L-DAP) to meso-diaminopimelate (meso-DAP), a precursor of L-lysine and an essential component of the bacterial peptidoglycan. This is Diaminopimelate epimerase from Halorhodospira halophila (strain DSM 244 / SL1) (Ectothiorhodospira halophila (strain DSM 244 / SL1)).